The primary structure comprises 631 residues: Dolichyl-diphosphooligosaccharide--protein glycosyltransferase subunit 2 (631 aa).

Positions 1-22 (MAPPGSSAVFLLALTITASTQA) are cleaved as a signal peptide. The Lumenal segment spans residues 23 to 540 (LTPTHYLTKH…REPEKRPPTV (518 aa)). Residue Asn-106 is glycosylated (N-linked (GlcNAc...) asparagine). A Glycyl lysine isopeptide (Lys-Gly) (interchain with G-Cter in ubiquitin) cross-link involves residue Lys-154. The helical transmembrane segment at 541-561 (VSNTFTALILSPLLLLFALWI) threads the bilayer. The Cytoplasmic segment spans residues 562 to 571 (RIGANVSNFT). Residues 572–592 (FAPSTVIFHLGHAAMLGLMYV) form a helical membrane-spanning segment. The Lumenal segment spans residues 593-596 (YWTQ). Residues 597–617 (LNMFQTLKYLAVLGTVTFLAG) traverse the membrane as a helical segment. Topologically, residues 618–631 (NRMLAQQAVKRTAH) are cytoplasmic.

It belongs to the SWP1 family. Component of the oligosaccharyltransferase (OST) complex. OST exists in two different complex forms which contain common core subunits RPN1, RPN2, OST48, OST4, DAD1 and TMEM258, either STT3A or STT3B as catalytic subunits, and form-specific accessory subunits. STT3A complex assembly occurs through the formation of 3 subcomplexes. Subcomplex 1 contains RPN1 and TMEM258, subcomplex 2 contains the STT3A-specific subunits STT3A, DC2/OSTC, and KCP2 as well as the core subunit OST4, and subcomplex 3 contains RPN2, DAD1, and OST48. The STT3A complex can form stable complexes with the Sec61 complex or with both the Sec61 and TRAP complexes. Interacts with DDI2. Interacts with TMEM35A/NACHO.

Its subcellular location is the endoplasmic reticulum. The protein localises to the endoplasmic reticulum membrane. Its pathway is protein modification; protein glycosylation. Functionally, subunit of the oligosaccharyl transferase (OST) complex that catalyzes the initial transfer of a defined glycan (Glc(3)Man(9)GlcNAc(2) in eukaryotes) from the lipid carrier dolichol-pyrophosphate to an asparagine residue within an Asn-X-Ser/Thr consensus motif in nascent polypeptide chains, the first step in protein N-glycosylation. N-glycosylation occurs cotranslationally and the complex associates with the Sec61 complex at the channel-forming translocon complex that mediates protein translocation across the endoplasmic reticulum (ER). All subunits are required for a maximal enzyme activity. The polypeptide is Dolichyl-diphosphooligosaccharide--protein glycosyltransferase subunit 2 (Rattus norvegicus (Rat)).